The following is a 467-amino-acid chain: NADH-quinone oxidoreductase subunit N 2 (467 aa).

13 consecutive transmembrane segments (helical) span residues 1–21, 31–51, 66–86, 99–119, 153–173, 195–215, 231–253, 258–280, 287–307, 315–335, 357–377, 394–414, and 434–454; these read MSIF…ALFV, VASW…FALG, LSQF…GIAA, FMLL…VELI, ILFG…IIAA, AVIG…LFPF, AAYV…AAFV, EVTT…AALV, LLGF…AAGS, AFYS…VCAI, LAMI…TAGF, WLVI…LSMV, and LIFG…PAPL.

Belongs to the complex I subunit 2 family. As to quaternary structure, NDH-1 is composed of 14 different subunits. Subunits NuoA, H, J, K, L, M, N constitute the membrane sector of the complex.

The protein localises to the cell inner membrane. The enzyme catalyses a quinone + NADH + 5 H(+)(in) = a quinol + NAD(+) + 4 H(+)(out). Its function is as follows. NDH-1 shuttles electrons from NADH, via FMN and iron-sulfur (Fe-S) centers, to quinones in the respiratory chain. The immediate electron acceptor for the enzyme in this species is believed to be ubiquinone. Couples the redox reaction to proton translocation (for every two electrons transferred, four hydrogen ions are translocated across the cytoplasmic membrane), and thus conserves the redox energy in a proton gradient. This Solidesulfovibrio magneticus (strain ATCC 700980 / DSM 13731 / RS-1) (Desulfovibrio magneticus) protein is NADH-quinone oxidoreductase subunit N 2.